Consider the following 554-residue polypeptide: HMG box-containing protein 4 (554 aa).

Disordered regions lie at residues Arg-14–Tyr-34, Gln-47–Gln-368, and His-418–Lys-468. The span at Thr-117–His-127 shows a compositional bias: polar residues. The segment covering Thr-221 to Ser-230 has biased composition (basic and acidic residues). Polar residues predominate over residues Pro-242–Gly-255. The span at Met-272–Lys-300 shows a compositional bias: basic residues. Residues Leu-317–Pro-335 are compositionally biased toward pro residues. The span at His-342–Lys-358 shows a compositional bias: basic and acidic residues. Residues Lys-360–Val-428 constitute a DNA-binding region (HMG box). Residues Ser-434–Pro-466 show a composition bias toward low complexity.

Interacts with nlk.2.

It localises to the nucleus. Functionally, negatively regulates Wnt/beta-catenin signaling during development. The polypeptide is HMG box-containing protein 4 (hmgxb4) (Xenopus tropicalis (Western clawed frog)).